A 379-amino-acid chain; its full sequence is Multicilin (379 aa).

Residues 1–129 are necessary and sufficient for its degradation during the cell cycle; the sequence is MQACEGSAAG…AMDDLIADSS (129 aa). Disordered stretches follow at residues 26-71 and 88-107; these read SRRT…APLP and LGTEASPSGDSSASQNPSLQ. The span at 92–107 shows a compositional bias: polar residues; the sequence is ASPSGDSSASQNPSLQ. Positions 130–379 are necessary and sufficient for proper nuclear localization; it reads SLMSPPLTNS…GGYKFRWVPS (250 aa). Residues 171 to 241 form a necessary and sufficient for interaction with GMNN and sufficient for homodimerization region; the sequence is PPPTEQYWKE…SVLDKLMITQ (71 aa). A coiled-coil region spans residues 175–223; that stretch reads EQYWKEVADQNQRALGTALIENNQLHVTLTQKQEEIASLRERNVQLKEL. The span at 291–309 shows a compositional bias: basic and acidic residues; it reads NRDPKRPRLQPEPDSKDCS. A disordered region spans residues 291–312; that stretch reads NRDPKRPRLQPEPDSKDCSSRN.

It belongs to the geminin family. In terms of assembly, heterodimer (via coiled-coil domain) with GMNN (via coiled-coil domain); targets GMNN to the nucleus. Can form homodimers (in vitro, via coiled-coil domain), but these are much less stable than the heterodimer formed with GMNN.

It is found in the nucleus. In terms of biological role, transcription regulator specifically required for multiciliate cell differentiation. Acts in a multiprotein complex containing E2F4 and E2F5 that binds and activates genes required for centriole biogenesis. Required for the deuterosome-mediated acentriolar pathway. Plays a role in mitotic cell cycle progression by promoting cell cycle exit. Modulates GMNN activity by reducing its affinity for CDT1. The polypeptide is Multicilin (Mcidas) (Mus musculus (Mouse)).